We begin with the raw amino-acid sequence, 464 residues long: MLDMSEARAQPPCSPSGTASSMSHVEDSDSDAPPSPAGSEGLGRAGGGGRGDTAEAADERFPACIRDAVSQVLKGYDWSLVPMPVRGGGGGTLKAKPHVKRPMNAFMVWAQAARRKLADQYPHLHNAELSKTLGKLWRLLSESEKRPFVEEAERLRVQHKKDHPDYKYQPRRRKSVKTGRSDSDSGTELGHHPGGPMYKADAVLGEAHHHSDHHTGQTHGPPTPPTTPKTDLHQASNGSKQELRLEGRRLVDSGRQNIDFSNVDISELSSEVISNMDTFDVHEFDQYLPLNGHSALPTEPSQATASGSYGGASYSHSGATGIGASPVWAHKGAPSASASPTEAGPLRPQIKTEQLSPSHYNDQSHGSPGRADYGSYSAQASVTTAASATAASSFASAQCDYTDLQASNYYSPYPGYPPSLYQYPYFHSSRRPYASPLLNGLSMPPAHSPSSNWDQPVYTTLTRP.

Disordered regions lie at residues 1-55 (MLDM…DTAE), 154-244 (RLRV…QELR), 292-315 (GHSA…ASYS), and 354-374 (QLSP…ADYG). The segment covering 40 to 51 (EGLGRAGGGGRG) has biased composition (gly residues). A dimerization (DIM) region spans residues 55–97 (EAADERFPACIRDAVSQVLKGYDWSLVPMPVRGGGGGTLKAKP). Positions 99-167 (VKRPMNAFMV…QHKKDHPDYK (69 aa)) form a DNA-binding region, HMG box. 2 stretches are compositionally biased toward basic and acidic residues: residues 154–168 (RLRV…DYKY) and 206–215 (EAHHHSDHHT). The interval 221 to 299 (PPTPPTTPKT…LNGHSALPTE (79 aa)) is transactivation domain (TAM). The span at 303-315 (ATASGSYGGASYS) shows a compositional bias: low complexity. Residues 347 to 464 (RPQIKTEQLS…QPVYTTLTRP (118 aa)) are transactivation domain (TAC). Residues 354–366 (QLSPSHYNDQSHG) show a composition bias toward polar residues. A 9aaTAD motif is present at residues 418–426 (PSLYQYPYF). The tract at residues 444–464 (PPAHSPSSNWDQPVYTTLTRP) is disordered. Residues 448 to 464 (SPSSNWDQPVYTTLTRP) are compositionally biased toward polar residues.

In terms of tissue distribution, brain, gut, limb, and testes. Slightly in liver, ovaries, spinal cord, lung and heart.

The protein localises to the nucleus. Transcription factor that may play a role in central nervous system, limb and facial development. May be involved in male sex determination. Binds the consensus motif 5'-[AT][AT]CAA[AT]G-3'. The polypeptide is Transcription factor SOX-8 (Mus musculus (Mouse)).